A 228-amino-acid chain; its full sequence is Aspartate racemase (228 aa).

Residue 47–49 (DRT) participates in substrate binding. The active-site Proton donor/acceptor is cysteine 82. Residues 83–85 (NTA) and lysine 164 contribute to the substrate site. Cysteine 194 serves as the catalytic Proton donor/acceptor.

Belongs to the aspartate/glutamate racemases family. Homodimer. The existence of the interchain disulfide bond seen in the crystal structures is uncertain, but disulfide bonds have been reported for cytoplasmic proteins from thermophiles.

The enzyme catalyses L-aspartate = D-aspartate. Weakly inhibited by citrate, but not by asparagine. In Pyrococcus horikoshii (strain ATCC 700860 / DSM 12428 / JCM 9974 / NBRC 100139 / OT-3), this protein is Aspartate racemase.